A 466-amino-acid chain; its full sequence is Peptidoglycan-N-acetylglucosamine deacetylase PgdA (466 aa).

Residues 1–5 lie on the Cytoplasmic side of the membrane; it reads MKIRW. Residues 6–26 form a helical membrane-spanning segment; the sequence is IRLSLVAILIIAVVFIGVIGF. Residues 27 to 466 lie on the Extracellular side of the membrane; it reads QKYQFSKSRN…FDKTDSRMVK (440 aa). One can recognise a NodB homology domain in the interval 266-440; that stretch reads KRIALTFDDG…KLKSQGYEFV (175 aa). Asp273 acts as the Proton acceptor in catalysis. Residues Asp274, His324, and His328 each contribute to the Zn(2+) site. Residue Tyr365 coordinates substrate. His415 functions as the Proton donor in the catalytic mechanism.

In terms of assembly, homodimer. Interacts (via transmembrane domain) with PbpA1 (via transmembrane domain); the interaction is important for the peptidoglycan N-deacetylase function of this protein. The cofactor is Zn(2+).

The protein localises to the cell membrane. Its subcellular location is the secreted. It localises to the cell wall. The catalysed reaction is peptidoglycan-N-acetyl-D-glucosamine + H2O = peptidoglycan-D-glucosamine + acetate.. Its function is as follows. Catalyzes the deacetylation of N-acetylglucosamine (GlcNAc) residues in peptidoglycan (PG). Also deacetylates N-acetylated PG. Does not deacetylate N-acetylmuramic acid. Confers host lysozyme resistance. Critical for virulence and escape from innate immune response of the host. Required for intracellular survival of bacteria in macrophages of the host. Required for successful host colonization. Controls the production of inflammatory mediators in the bone marrow derived macrophages (BMMs) of the infected mouse. Suppresses Toll-like receptor 2 (TLR2)-dependent secretion of interleukin 6 (IL-6) and interferon-beta (IFN-beta) in the macrophages of the infected mouse. May decrease accessibility of pattern recognition receptors (PRRs) such as nucleotide-binding oligomerization domain protein (NOD) 1 of the host to the bacterial cell wall components. Protects cells from autolysis induced by lysozyme or by other autolysis-inducing agents. The protein is Peptidoglycan-N-acetylglucosamine deacetylase PgdA of Listeria monocytogenes serotype 1/2a (strain 10403S).